Here is a 167-residue protein sequence, read N- to C-terminus: Small ribosomal subunit protein uS5 (167 aa).

The 64-residue stretch at 12-75 (LEDNVVAINR…EAARKNLIEV (64 aa)) folds into the S5 DRBM domain.

The protein belongs to the universal ribosomal protein uS5 family. In terms of assembly, part of the 30S ribosomal subunit. Contacts proteins S4 and S8.

In terms of biological role, with S4 and S12 plays an important role in translational accuracy. Its function is as follows. Located at the back of the 30S subunit body where it stabilizes the conformation of the head with respect to the body. The chain is Small ribosomal subunit protein uS5 from Levilactobacillus brevis (strain ATCC 367 / BCRC 12310 / CIP 105137 / JCM 1170 / LMG 11437 / NCIMB 947 / NCTC 947) (Lactobacillus brevis).